We begin with the raw amino-acid sequence, 54 residues long: Potassium channel toxin alpha-KTx 14.3 (54 aa).

Positions 1 to 23 (MKIFFAILLILAVCSMAIWTVNG) are cleaved as a signal peptide.

It belongs to the short scorpion toxin superfamily. Potassium channel inhibitor family. Alpha-KTx 14 subfamily. Post-translationally, contains 3 disulfide bridges. In terms of tissue distribution, expressed by the venom gland.

The protein localises to the secreted. In terms of biological role, potential blocker of potassium channels. This chain is Potassium channel toxin alpha-KTx 14.3, found in Olivierus martensii (Manchurian scorpion).